A 312-amino-acid chain; its full sequence is tRNA-cytidine(32) 2-sulfurtransferase (312 aa).

Residues 47-52 (SGGKDS) carry the PP-loop motif motif. [4Fe-4S] cluster is bound by residues C122, C125, and C213.

This sequence belongs to the TtcA family. In terms of assembly, homodimer. The cofactor is Mg(2+). [4Fe-4S] cluster is required as a cofactor.

The protein localises to the cytoplasm. It carries out the reaction cytidine(32) in tRNA + S-sulfanyl-L-cysteinyl-[cysteine desulfurase] + AH2 + ATP = 2-thiocytidine(32) in tRNA + L-cysteinyl-[cysteine desulfurase] + A + AMP + diphosphate + H(+). The protein operates within tRNA modification. In terms of biological role, catalyzes the ATP-dependent 2-thiolation of cytidine in position 32 of tRNA, to form 2-thiocytidine (s(2)C32). The sulfur atoms are provided by the cysteine/cysteine desulfurase (IscS) system. This is tRNA-cytidine(32) 2-sulfurtransferase from Shewanella frigidimarina (strain NCIMB 400).